A 427-amino-acid chain; its full sequence is Enolase (427 aa).

Position 163 (Gln-163) interacts with (2R)-2-phosphoglycerate. Glu-205 acts as the Proton donor in catalysis. Mg(2+)-binding residues include Asp-242, Glu-288, and Asp-315. Lys-340, Arg-369, Ser-370, and Lys-391 together coordinate (2R)-2-phosphoglycerate. The active-site Proton acceptor is Lys-340.

It belongs to the enolase family. It depends on Mg(2+) as a cofactor.

Its subcellular location is the cytoplasm. It is found in the secreted. The protein resides in the cell surface. It catalyses the reaction (2R)-2-phosphoglycerate = phosphoenolpyruvate + H2O. It functions in the pathway carbohydrate degradation; glycolysis; pyruvate from D-glyceraldehyde 3-phosphate: step 4/5. Its function is as follows. Catalyzes the reversible conversion of 2-phosphoglycerate (2-PG) into phosphoenolpyruvate (PEP). It is essential for the degradation of carbohydrates via glycolysis. This is Enolase from Amoebophilus asiaticus (strain 5a2).